Here is a 610-residue protein sequence, read N- to C-terminus: Pyruvate decarboxylase 1 (610 aa).

The substrate site is built by aspartate 72 and histidine 159. A thiamine pyrophosphate binding region spans residues 437–519 (DSWFNCQKLR…FLINNGGYTI (83 aa)). Mg(2+) contacts are provided by aspartate 487, asparagine 514, and glycine 516. Glutamate 520 provides a ligand contact to substrate.

The protein belongs to the TPP enzyme family. In terms of assembly, homotetramer. A metal cation is required as a cofactor. It depends on thiamine diphosphate as a cofactor.

The enzyme catalyses a 2-oxocarboxylate + H(+) = an aldehyde + CO2. The sequence is that of Pyruvate decarboxylase 1 (PDC1) from Zea mays (Maize).